The following is a 298-amino-acid chain: 5'-AMP-activated protein kinase subunit beta (298 aa).

The disordered stretch occupies residues 1-98 (MGNVQSQEGE…KTHQPYSGPC (98 aa)). Over residues 19-30 (QDATTTPDNANN) the composition is skewed to polar residues. Residues 48–59 (LNQEGEMSDDNQ) show a composition bias toward acidic residues. Positions 60–77 (QEGGNNRTSQNGTSGSSG) are enriched in polar residues. The span at 78-91 (HTKRRSQTSGKKTH) shows a compositional bias: basic residues. 250–252 (DQS) is a binding site for ADP.

This sequence belongs to the 5'-AMP-activated protein kinase beta subunit family. As to quaternary structure, AMPK is a heterotrimer of an alpha catalytic subunit (ssp2), a beta (amk2) and a gamma non-catalytic subunits (cbs2). The beta subunit serves as a bridge between the catalytic and the regulatory subunit.

The protein localises to the cytoplasm. In terms of biological role, beta subunit of AMP-activated protein kinase (AMPK), which is required for transcriptional, metabolic, and developmental adaptations in response to glucose limitation. Has a structural role, mediating heterotrimer formation, and a regulatory role, defining carbon source-regulated subcellular location and substrate specificity of the AMPK kinase complex. In Schizosaccharomyces pombe (strain 972 / ATCC 24843) (Fission yeast), this protein is 5'-AMP-activated protein kinase subunit beta (amk2).